Consider the following 354-residue polypeptide: Rhodopsin (354 aa).

Residues 1–36 (MNGTEGENFYVPMSNKTGVVRNPFEYPQYYLADHWM) lie on the Extracellular side of the membrane. 2 N-linked (GlcNAc...) asparagine glycosylation sites follow: Asn-2 and Asn-15. The chain crosses the membrane as a helical span at residues 37–61 (FAVLAAYMFFLIITGFPVNFLTLFV). Over 62–73 (TIQNKKLRQPLN) the chain is Cytoplasmic. Residues 74-96 (YILLNLAVANLFMVFGGFTTTLI) form a helical membrane-spanning segment. The Extracellular segment spans residues 97–110 (TSMNGYFVFGSTGC). A disulfide bridge links Cys-110 with Cys-187. The helical transmembrane segment at 111–133 (NLEGFFATLGGEISLWSLVVLAI) threads the bilayer. Residues 134-136 (ERY) carry the 'Ionic lock' involved in activated form stabilization motif. Over 134-152 (ERYVVVCKPMSNFRFGSQH) the chain is Cytoplasmic. A helical transmembrane segment spans residues 153–173 (AIAGVSLTWVMAMACAAPPLV). Residues 174 to 202 (GWSRYIPEGLQCSCGIDYYTPKPEINNVS) lie on the Extracellular side of the membrane. Asn-200 is a glycosylation site (N-linked (GlcNAc...) asparagine). A helical membrane pass occupies residues 203–224 (FVIYMFVVHFSIPLTIIFFCYG). Over 225-252 (RLVCTVKAAAAQQQESETTQRAEREVTR) the chain is Cytoplasmic. Residues 253 to 274 (MVVIMVIGFLICWLPYASVALY) form a helical membrane-spanning segment. Residues 275-286 (IFNNQGSEFGPV) lie on the Extracellular side of the membrane. A helical membrane pass occupies residues 287-308 (FMTIPSFFAKSSALYNPLIYIL). Lys-296 bears the N6-(retinylidene)lysine mark. Over 309-354 (MNKQFRNCMITTLCCGKNPFEEEESTSASASKTEASSVSSSQVSPA) the chain is Cytoplasmic. 2 S-palmitoyl cysteine lipidation sites follow: Cys-322 and Cys-323. Residues 333–354 (STSASASKTEASSVSSSQVSPA) are disordered. Residues 334–354 (TSASASKTEASSVSSSQVSPA) are compositionally biased toward low complexity.

The protein belongs to the G-protein coupled receptor 1 family. Opsin subfamily. In terms of processing, phosphorylated on some or all of the serine and threonine residues present in the C-terminal region. Contains one covalently linked retinal chromophore.

The protein localises to the membrane. Its subcellular location is the cell projection. It localises to the cilium. The protein resides in the photoreceptor outer segment. In terms of biological role, photoreceptor required for image-forming vision at low light intensity. While most salt water fish species use retinal as chromophore, most freshwater fish use 3-dehydroretinal, or a mixture of retinal and 3-dehydroretinal. Light-induced isomerization of 11-cis to all-trans retinal triggers a conformational change that activates signaling via G-proteins. Subsequent receptor phosphorylation mediates displacement of the bound G-protein alpha subunit by arrestin and terminates signaling. The sequence is that of Rhodopsin (rho) from Galeus melastomus (Blackmouth catshark).